We begin with the raw amino-acid sequence, 163 residues long: Photosystem II extrinsic protein V (163 aa).

The first 26 residues, 1–26, serve as a signal peptide directing secretion; it reads MFKKSSQLFSLVFFTIFSIFIGTASA. 4 residues coordinate heme c: Cys63, Cys66, His67, and Met130.

The protein belongs to the cytochrome c family. PsbV subfamily. In terms of assembly, PSII is composed of 1 copy each of membrane proteins PsbA, PsbB, PsbC, PsbD, PsbE, PsbF, PsbH, PsbI, PsbJ, PsbK, PsbL, PsbM, PsbT, PsbY, PsbZ, Psb30/Ycf12, at least 3 peripheral proteins of the oxygen-evolving complex and a large number of cofactors. It forms dimeric complexes. It depends on heme c as a cofactor.

It is found in the plastid. The protein localises to the chloroplast thylakoid membrane. Functionally, one of the extrinsic, lumenal subunits of photosystem II (PSII). PSII is a light-driven water plastoquinone oxidoreductase, using light energy to abstract electrons from H(2)O, generating a proton gradient subsequently used for ATP formation. The extrinsic proteins stabilize the structure of photosystem II oxygen-evolving complex (OEC), the ion environment of oxygen evolution and protect the OEC against heat-induced inactivation. The sequence is that of Photosystem II extrinsic protein V from Phaeodactylum tricornutum (strain CCAP 1055/1).